Consider the following 246-residue polypeptide: tRNA (guanine-N(1)-)-methyltransferase (246 aa).

S-adenosyl-L-methionine is bound by residues Gly112 and 131-136; that span reads IGDYVL.

Belongs to the RNA methyltransferase TrmD family. As to quaternary structure, homodimer.

It localises to the cytoplasm. The enzyme catalyses guanosine(37) in tRNA + S-adenosyl-L-methionine = N(1)-methylguanosine(37) in tRNA + S-adenosyl-L-homocysteine + H(+). In terms of biological role, specifically methylates guanosine-37 in various tRNAs. The chain is tRNA (guanine-N(1)-)-methyltransferase from Thermosipho africanus (strain TCF52B).